A 318-amino-acid polypeptide reads, in one-letter code: tRNA pseudouridine synthase B (318 aa).

D47 (nucleophile) is an active-site residue.

It belongs to the pseudouridine synthase TruB family. Type 1 subfamily.

The catalysed reaction is uridine(55) in tRNA = pseudouridine(55) in tRNA. Responsible for synthesis of pseudouridine from uracil-55 in the psi GC loop of transfer RNAs. In Shewanella putrefaciens (strain CN-32 / ATCC BAA-453), this protein is tRNA pseudouridine synthase B.